The chain runs to 280 residues: Probable S-methyl-5'-thioinosine phosphorylase (280 aa).

Phosphate-binding positions include Thr-8 and 50–51; that span reads RH. Met-175 is a substrate binding site. Thr-176 provides a ligand contact to phosphate. Residue 199–201 coordinates substrate; it reads NYA.

This sequence belongs to the PNP/MTAP phosphorylase family. MTAP subfamily. In terms of assembly, homotrimer.

It carries out the reaction S-methyl-5'-thioinosine + phosphate = 5-(methylsulfanyl)-alpha-D-ribose 1-phosphate + hypoxanthine. It functions in the pathway purine metabolism; purine nucleoside salvage. Its function is as follows. Catalyzes the reversible phosphorylation of S-methyl-5'-thioinosine (MTI) to hypoxanthine and 5-methylthioribose-1-phosphate. Involved in the breakdown of S-methyl-5'-thioadenosine (MTA), a major by-product of polyamine biosynthesis. Catabolism of (MTA) occurs via deamination to MTI and phosphorolysis to hypoxanthine. The sequence is that of Probable S-methyl-5'-thioinosine phosphorylase from Methanothermobacter thermautotrophicus (strain ATCC 29096 / DSM 1053 / JCM 10044 / NBRC 100330 / Delta H) (Methanobacterium thermoautotrophicum).